The chain runs to 275 residues: Transcription factor JUNGBRUNNEN 1 (275 aa).

The tract at residues methionine 1 to phenylalanine 24 is disordered. An NAC domain is found at proline 18–arginine 167. A DNA-binding region spans residues valine 115–asparagine 173. Residues cysteine 191–proline 219 form a disordered region. Over residues aspartate 198–serine 211 the composition is skewed to basic and acidic residues.

In terms of tissue distribution, expressed in roots, root caps, cotyledons, tips and margin of young leaves, senescent regions of fully expanded leaves and floral tissues, including old sepals, petals, staments, mature anthers and pollen grains. Not detected in the abscission zone of open flowers, emerging lateral roots and root meristematic zones.

The protein resides in the nucleus. Transcription factor that binds to the 5'- RRYGCCGT-3' consensus core sequence. Central longevity regulator. Negative regulator of leaf senescence. Modulates cellular H(2)O(2) levels and enhances tolerance to various abiotic stresses through the regulation of DREB2A. This chain is Transcription factor JUNGBRUNNEN 1 (JUB1), found in Arabidopsis thaliana (Mouse-ear cress).